The following is a 72-amino-acid chain: Bowman-Birk type trypsin inhibitor (72 aa).

7 disulfides stabilise this stretch: C12–C66, C13–C28, C16–C62, C18–C26, C36–C43, C40–C55, and C45–C53.

Belongs to the Bowman-Birk serine protease inhibitor family.

This Vigna radiata var. radiata (Mung bean) protein is Bowman-Birk type trypsin inhibitor.